The following is a 123-amino-acid chain: PTS system glucitol/sorbitol-specific EIIA component (123 aa).

The PTS EIIA type-5 domain occupies 3 to 116; sequence VIYQTTITRI…PDDIAPGSVL (114 aa). Histidine 43 (tele-phosphohistidine intermediate) is an active-site residue. Residue histidine 43 is modified to Phosphohistidine; by HPr.

The protein resides in the cytoplasm. Functionally, the phosphoenolpyruvate-dependent sugar phosphotransferase system (sugar PTS), a major carbohydrate active transport system, catalyzes the phosphorylation of incoming sugar substrates concomitantly with their translocation across the cell membrane. The enzyme II complex composed of SrlA, SrlB and SrlE is involved in glucitol/sorbitol transport. It can also use D-mannitol. In Escherichia coli (strain K12), this protein is PTS system glucitol/sorbitol-specific EIIA component (srlB).